Here is a 473-residue protein sequence, read N- to C-terminus: MSPSDLHLPVPGHPIAAIATPVGVGALAIVRISGAGVLDLADRVFRKVHGSGKLAEAAGYTAHFGRLYDGEEMVDEVIALVFRAPRSFTAEQMVEFTCHGGPVVVGRVLRLMLDNGCRLAEPGEFTRRAFLNGRIDLLQAEAIGEMIHARTESAYRTAVSQMKGDLSVRLGGLREQLIRSCALIELELDFSEEDVEFQSRDELTMQIETLRSEVNRLIDSYQHGRIVSEGVSTVIAGKPNAGKSTLLNTLLGQERAIVSHMPGTTRDYIEECFIHDKTMFRLTDTAGLREAGEEIEHEGIRRSRMKMAEADLILYLLDLGTERLDDELTEIRELKAAHPAAKFLTVANKLDRAANADALIRAIADGTGTEVIGISALNGDGIDTLKQHMGDLVKNLDKLHEASVLVTSLRHYEALRNASDALQNALELIAHESETELIAFELRAALDYVGQITGKVVNEEVLNTIFDKFCIGK.

(6S)-5-formyl-5,6,7,8-tetrahydrofolate-binding residues include Arg31, Glu95, and Arg134. The TrmE-type G domain maps to 230–394; sequence GVSTVIAGKP…LKQHMGDLVK (165 aa). Residues 240 to 245, 259 to 265, and 284 to 287 contribute to the GTP site; these read NAGKST, SHMPGTT, and DTAG. Mg(2+) contacts are provided by Ser244 and Thr265. Lys473 contributes to the (6S)-5-formyl-5,6,7,8-tetrahydrofolate binding site.

The protein belongs to the TRAFAC class TrmE-Era-EngA-EngB-Septin-like GTPase superfamily. TrmE GTPase family. Homodimer. Heterotetramer of two MnmE and two MnmG subunits. K(+) is required as a cofactor.

It is found in the cytoplasm. Exhibits a very high intrinsic GTPase hydrolysis rate. Involved in the addition of a carboxymethylaminomethyl (cmnm) group at the wobble position (U34) of certain tRNAs, forming tRNA-cmnm(5)s(2)U34. This is tRNA modification GTPase MnmE from Chlorobaculum tepidum (strain ATCC 49652 / DSM 12025 / NBRC 103806 / TLS) (Chlorobium tepidum).